We begin with the raw amino-acid sequence, 412 residues long: Probable serine/threonine-protein kinase PBL4 (412 aa).

Gly-2 is lipidated: N-myristoyl glycine. The S-palmitoyl cysteine moiety is linked to residue Cys-4. A disordered region spans residues 14-40 (RESPYRGSSRISAKRSQSSRLSSLTIQ). Residues 21-40 (SSRISAKRSQSSRLSSLTIQ) are compositionally biased toward low complexity. Thr-72 is modified (phosphothreonine). In terms of domain architecture, Protein kinase spans 83–369 (FRPDSVIGEG…STLEELEMTL (287 aa)). Residues 89–97 (IGEGGFGYV) and Lys-121 each bind ATP. Tyr-167 bears the Phosphotyrosine mark. Asp-215 acts as the Proton acceptor in catalysis. Phosphoserine is present on residues Ser-219 and Ser-249. Thr-250 and Thr-255 each carry phosphothreonine. Tyr-263 is modified (phosphotyrosine).

The protein belongs to the protein kinase superfamily. Ser/Thr protein kinase family.

Its subcellular location is the cell membrane. It carries out the reaction L-seryl-[protein] + ATP = O-phospho-L-seryl-[protein] + ADP + H(+). The catalysed reaction is L-threonyl-[protein] + ATP = O-phospho-L-threonyl-[protein] + ADP + H(+). In terms of biological role, may be involved in plant defense signaling. This Arabidopsis thaliana (Mouse-ear cress) protein is Probable serine/threonine-protein kinase PBL4.